The sequence spans 512 residues: GTPase Obg (512 aa).

Positions 2-159 constitute an Obg domain; it reads ATFVDTVTLH…GDVVLELKVV (158 aa). The OBG-type G domain occupies 160–336; that stretch reads ADVALVGYPS…LSFALAELVE (177 aa). GTP is bound by residues 166-173, 191-195, 212-215, 288-291, and 317-319; these read GYPSAGKS, FTTLH, DVPG, NKID, and STV. The Mg(2+) site is built by Ser-173 and Thr-193. In terms of domain architecture, OCT spans 355–439; the sequence is PRAVNEKPFT…GDGIVFDWEP (85 aa). The interval 491 to 512 is disordered; that stretch reads GEAGLWADEDGTDEDASSDAKA. Residues 497-512 are compositionally biased toward acidic residues; it reads ADEDGTDEDASSDAKA.

It belongs to the TRAFAC class OBG-HflX-like GTPase superfamily. OBG GTPase family. In terms of assembly, monomer. Requires Mg(2+) as cofactor.

The protein localises to the cytoplasm. In terms of biological role, an essential GTPase which binds GTP, GDP and possibly (p)ppGpp with moderate affinity, with high nucleotide exchange rates and a fairly low GTP hydrolysis rate. Plays a role in control of the cell cycle, stress response, ribosome biogenesis and in those bacteria that undergo differentiation, in morphogenesis control. The polypeptide is GTPase Obg (Clavibacter michiganensis subsp. michiganensis (strain NCPPB 382)).